We begin with the raw amino-acid sequence, 262 residues long: Carbonic anhydrase 1 (262 aa).

A2 bears the N-acetylalanine mark. The Alpha-carbonic anhydrase domain maps to 4-261 (LNWSYEGENG…LKGRQVKASF (258 aa)). H65 functions as the Proton donor/acceptor in the catalytic mechanism. Residues H95, H97, and H120 each contribute to the Zn(2+) site. Residues T200 and 200-201 (TH) each bind substrate.

This sequence belongs to the alpha-carbonic anhydrase family. Zn(2+) serves as cofactor.

The protein localises to the cytoplasm. The catalysed reaction is hydrogencarbonate + H(+) = CO2 + H2O. It catalyses the reaction urea = cyanamide + H2O. Inhibited by acetazolamide. Its function is as follows. Catalyzes the reversible hydration of carbon dioxide. Can hydrate cyanamide to urea. The polypeptide is Carbonic anhydrase 1 (CA1) (Monodelphis domestica (Gray short-tailed opossum)).